The chain runs to 431 residues: tRNA(Ile)-lysidine synthase (431 aa).

ATP is bound at residue 25-30 (SGGPDS).

This sequence belongs to the tRNA(Ile)-lysidine synthase family.

It localises to the cytoplasm. The enzyme catalyses cytidine(34) in tRNA(Ile2) + L-lysine + ATP = lysidine(34) in tRNA(Ile2) + AMP + diphosphate + H(+). Functionally, ligates lysine onto the cytidine present at position 34 of the AUA codon-specific tRNA(Ile) that contains the anticodon CAU, in an ATP-dependent manner. Cytidine is converted to lysidine, thus changing the amino acid specificity of the tRNA from methionine to isoleucine. This chain is tRNA(Ile)-lysidine synthase, found in Lactobacillus johnsonii (strain CNCM I-12250 / La1 / NCC 533).